We begin with the raw amino-acid sequence, 425 residues long: 3-isopropylmalate dehydratase large subunit (425 aa).

Residues cysteine 305, cysteine 365, and cysteine 368 each coordinate [4Fe-4S] cluster.

The protein belongs to the aconitase/IPM isomerase family. LeuC type 2 subfamily. In terms of assembly, heterodimer of LeuC and LeuD. [4Fe-4S] cluster serves as cofactor.

The enzyme catalyses (2R,3S)-3-isopropylmalate = (2S)-2-isopropylmalate. Its pathway is amino-acid biosynthesis; L-leucine biosynthesis; L-leucine from 3-methyl-2-oxobutanoate: step 2/4. Catalyzes the isomerization between 2-isopropylmalate and 3-isopropylmalate, via the formation of 2-isopropylmaleate. This Clostridioides difficile (strain 630) (Peptoclostridium difficile) protein is 3-isopropylmalate dehydratase large subunit.